Consider the following 77-residue polypeptide: MAHHRPKPDDRSDNVEKLQDMVQNTIENIEKAEETMQFASPEEREKIAEKNKRREEAIAAMRAEIKDEAAARENGYR.

The protein belongs to the Tlp family.

The protein localises to the spore core. This chain is Small, acid-soluble spore protein Tlp, found in Geobacillus sp. (strain WCH70).